We begin with the raw amino-acid sequence, 131 residues long: Con-Ins Q1 (131 aa).

A signal peptide spans 1 to 24; sequence MTTSSYFLLVALGLLLYLCQSSFG. 4 cysteine pairs are disulfide-bonded: Cys29–Cys107, Cys41–Cys110, Cys53–Cys123, and Cys109–Cys114. Positions 59-92 are cleaved as a propeptide — c peptide; the sequence is LQGGTDDARKKRGRASLLRKRRGFLSMLKARAKR. Glu118 is subject to 4-carboxyglutamate; partial. Ser130 carries the serine amide modification.

The protein belongs to the insulin family. As to quaternary structure, heterodimer of A and B chains; disulfide-linked. Expressed by the venom gland.

It is found in the secreted. This venom insulin facilitates prey capture by rapidly inducing hypoglycemic shock. Intraperitoneal injection of this peptide into zebrafish lowers blood glucose with the same potency than human insulin. In vivo, when applied to water, this peptide reduces overall locomotor activity of zebrafish larvae, observed as a significant decrease in the percentage of time spent swimming and movement frequency. The polypeptide is Con-Ins Q1 (Conus quercinus (Oak cone)).